The following is a 323-amino-acid chain: Transmembrane protein 171 (323 aa).

Transmembrane regions (helical) follow at residues 22–42, 57–77, 112–132, and 159–179; these read IFFL…ISIF, MVLK…VILA, LIFG…GIWV, and FLSL…FFVV. Over residues 251 to 268 the composition is skewed to polar residues; the sequence is YSSLFNLSRTPTPENQGA. Positions 251 to 323 are disordered; sequence YSSLFNLSRT…LGAPSESSPP (73 aa). The segment covering 281–290 has biased composition (low complexity); sequence SGPGSSSESS.

The protein localises to the membrane. This Rattus norvegicus (Rat) protein is Transmembrane protein 171 (Tmem171).